Consider the following 315-residue polypeptide: N-acetyl-gamma-glutamyl-phosphate reductase (315 aa).

Cysteine 117 is a catalytic residue.

The protein belongs to the NAGSA dehydrogenase family. Type 2 subfamily.

The protein resides in the cytoplasm. It catalyses the reaction N-acetyl-L-glutamate 5-semialdehyde + phosphate + NADP(+) = N-acetyl-L-glutamyl 5-phosphate + NADPH + H(+). Its pathway is amino-acid biosynthesis; L-arginine biosynthesis; N(2)-acetyl-L-ornithine from L-glutamate: step 3/4. Its function is as follows. Catalyzes the NADPH-dependent reduction of N-acetyl-5-glutamyl phosphate to yield N-acetyl-L-glutamate 5-semialdehyde. This chain is N-acetyl-gamma-glutamyl-phosphate reductase, found in Burkholderia ambifaria (strain ATCC BAA-244 / DSM 16087 / CCUG 44356 / LMG 19182 / AMMD) (Burkholderia cepacia (strain AMMD)).